The primary structure comprises 249 residues: Methyl-coenzyme M reductase I subunit gamma (249 aa).

R120 provides a ligand contact to coenzyme M.

It belongs to the methyl-coenzyme M reductase gamma subunit family. MCR is a hexamer of two alpha, two beta, and two gamma chains, forming a dimer of heterotrimers. Coenzyme F430 is required as a cofactor.

Its subcellular location is the cytoplasm. It carries out the reaction coenzyme B + methyl-coenzyme M = methane + coenzyme M-coenzyme B heterodisulfide. The protein operates within one-carbon metabolism; methyl-coenzyme M reduction; methane from methyl-coenzyme M: step 1/1. Methyl-coenzyme M reductase activity is inhibited by 3-nitrooxypropanol (3-NOP) in vitro and in vivo, by oxidation of its active site Ni(I), which stops both growth and methanogenesis. Is also inhibited by the reaction product CoM-S-S-CoB. Functionally, component of the methyl-coenzyme M reductase (MCR) I that catalyzes the reductive cleavage of methyl-coenzyme M (CoM-S-CH3 or 2-(methylthio)ethanesulfonate) using coenzyme B (CoB or 7-mercaptoheptanoylthreonine phosphate) as reductant which results in the production of methane and the mixed heterodisulfide of CoB and CoM (CoM-S-S-CoB). This is the final step in methanogenesis. Neither N-6-mercaptohexanoylthreonine phosphate (H-S-HxoTP) nor N-8-mercaptooctanoylthreonine phosphate (H-SOcoTP) nor any other thiol compound such as CoA or CoM can substitute for CoB as the electron donor. The sequence is that of Methyl-coenzyme M reductase I subunit gamma (mcrG) from Methanothermobacter marburgensis (strain ATCC BAA-927 / DSM 2133 / JCM 14651 / NBRC 100331 / OCM 82 / Marburg) (Methanobacterium thermoautotrophicum).